Reading from the N-terminus, the 150-residue chain is D-aminoacyl-tRNA deacylase (150 aa).

A Gly-cisPro motif, important for rejection of L-amino acids motif is present at residues 138–139 (GP).

Belongs to the DTD family. Homodimer.

The protein resides in the cytoplasm. The catalysed reaction is glycyl-tRNA(Ala) + H2O = tRNA(Ala) + glycine + H(+). The enzyme catalyses a D-aminoacyl-tRNA + H2O = a tRNA + a D-alpha-amino acid + H(+). Its function is as follows. An aminoacyl-tRNA editing enzyme that deacylates mischarged D-aminoacyl-tRNAs. Also deacylates mischarged glycyl-tRNA(Ala), protecting cells against glycine mischarging by AlaRS. Acts via tRNA-based rather than protein-based catalysis; rejects L-amino acids rather than detecting D-amino acids in the active site. By recycling D-aminoacyl-tRNA to D-amino acids and free tRNA molecules, this enzyme counteracts the toxicity associated with the formation of D-aminoacyl-tRNA entities in vivo and helps enforce protein L-homochirality. The polypeptide is D-aminoacyl-tRNA deacylase (Parabacteroides distasonis (strain ATCC 8503 / DSM 20701 / CIP 104284 / JCM 5825 / NCTC 11152)).